A 736-amino-acid chain; its full sequence is Cytosolic neutral trehalase (736 aa).

The tract at residues 1 to 47 is disordered; the sequence is MSEAPQARRVGSVDDHSVYDDAKTYYTSEERHNNSRSGPRQRTYSQN. Basic and acidic residues predominate over residues 11–33; sequence GSVDDHSVYDDAKTYYTSEERHN. Over residues 35–47 the composition is skewed to polar residues; that stretch reads SRSGPRQRTYSQN. Ca(2+) is bound by residues Asp-92, Asp-94, Asn-96, Gln-98, and Asp-103. Residues Arg-279, 286 to 287, Asn-323, 332 to 334, Glu-399, Arg-448, and Gly-451 each bind substrate; these read WD and RSQ. Residues Asp-453 and Glu-657 each act as proton donor/acceptor in the active site.

It belongs to the glycosyl hydrolase 37 family. It depends on Ca(2+) as a cofactor.

It localises to the cytoplasm. The enzyme catalyses alpha,alpha-trehalose + H2O = alpha-D-glucose + beta-D-glucose. Its pathway is carbohydrate degradation. Its function is as follows. Hydrolyzes intracellular trehalose to glucose. Plays a role in pathogenicity, specifically in proliferation of invasive hyphae in rice blast disease. The chain is Cytosolic neutral trehalase (NTH1) from Pyricularia oryzae (strain 70-15 / ATCC MYA-4617 / FGSC 8958) (Rice blast fungus).